Reading from the N-terminus, the 242-residue chain is Tryptophan synthase alpha chain (242 aa).

Residues Glu-31 and Asp-42 each act as proton acceptor in the active site.

The protein belongs to the TrpA family. As to quaternary structure, tetramer of two alpha and two beta chains.

The enzyme catalyses (1S,2R)-1-C-(indol-3-yl)glycerol 3-phosphate + L-serine = D-glyceraldehyde 3-phosphate + L-tryptophan + H2O. Its pathway is amino-acid biosynthesis; L-tryptophan biosynthesis; L-tryptophan from chorismate: step 5/5. Functionally, the alpha subunit is responsible for the aldol cleavage of indoleglycerol phosphate to indole and glyceraldehyde 3-phosphate. The protein is Tryptophan synthase alpha chain of Staphylococcus aureus (strain bovine RF122 / ET3-1).